Consider the following 393-residue polypeptide: Isocitrate dehydrogenase [NAD] subunit gamma, mitochondrial (393 aa).

Residues methionine 1–isoleucine 39 constitute a mitochondrion transit peptide. 2 residues coordinate citrate: threonine 120 and asparagine 133. Substrate-binding residues include arginine 136, arginine 167, and aspartate 254. Residue aspartate 254 coordinates Mn(2+). Residues asparagine 312, threonine 313, and asparagine 324 each contribute to the ADP site.

The protein belongs to the isocitrate and isopropylmalate dehydrogenases family. Heterooligomer of subunits alpha (IDH3A), beta (IDH3B), and gamma (IDH3G) in the apparent ratio of 2:1:1. The heterodimer containing one IDH3A and one IDH3B subunit and the heterodimer containing one IDH3A and one IDH3G subunit assemble into a heterotetramer (which contains two subunits of IDH3A, one of IDH3B and one of IDH3G) and further into the heterooctamer. Requires Mg(2+) as cofactor. Mn(2+) is required as a cofactor.

Its subcellular location is the mitochondrion. Its activity is regulated as follows. The heterotetramer and the heterodimer composed of IDH3A and IDH3G subunits can be allosterically activated by citrate (CIT) or/and ADP, and the two activators can act independently or synergistically. The heterodimer composed of IDH3A and IDH3B subunits cannot be allosterically regulated and the allosteric regulation of the heterotetramer is through the IDH3G subunit and not the IDH3B subunit. The IDH3G subunit contains the allosteric site which consists of a CIT-binding site and an ADP-binding site, and the binding of CIT and ADP causes conformational changes at the allosteric site which are transmitted to the active site in the catalytic subunit (IDH3A) through a cascade of conformational changes at the heterodimer interface, leading to stabilization of the isocitrate-binding at the active site and thus activation of the enzyme. ATP can activate the heterotetramer and the heterodimer composed of IDH3A and IDH3G subunits at low concentrations but inhibits their activities at high concentrations, whereas ATP exhibits only inhibitory effect on the heterodimer composed of IDH3A and IDH3B subunits. In terms of biological role, regulatory subunit which plays a role in the allosteric regulation of the enzyme catalyzing the decarboxylation of isocitrate (ICT) into alpha-ketoglutarate. The heterodimer composed of the alpha (IDH3A) and beta (IDH3B) subunits and the heterodimer composed of the alpha (IDH3A) and gamma (IDH3G) subunits, have considerable basal activity but the full activity of the heterotetramer (containing two subunits of IDH3A, one of IDH3B and one of IDH3G) requires the assembly and cooperative function of both heterodimers. The sequence is that of Isocitrate dehydrogenase [NAD] subunit gamma, mitochondrial (IDH3G) from Homo sapiens (Human).